The sequence spans 288 residues: Anthranilate synthase beta subunit 1, chloroplastic (288 aa).

A chloroplast-targeting transit peptide spans 1 to 58; sequence MACSHLAAAAAAASPAAARSPAASSAATASAFARLSATPRVASGGLAVRGQRGVAAVV. In terms of domain architecture, Glutamine amidotransferase type-1 spans 83 to 282; the sequence is PIIVIDNYDS…VRFIEELEKQ (200 aa). 134-136 contributes to the L-glutamine binding site; it reads GPG. The active-site Nucleophile is the C161. L-glutamine is bound by residues Q165 and 215–216; that span reads SL. Catalysis depends on residues H256 and E258.

Heterotetramer consisting of two non-identical subunits: a beta subunit and a large alpha subunit. Expressed in roots and leaves.

Its subcellular location is the plastid. The protein localises to the chloroplast. The enzyme catalyses chorismate + L-glutamine = anthranilate + pyruvate + L-glutamate + H(+). It participates in amino-acid biosynthesis; L-tryptophan biosynthesis; L-tryptophan from chorismate: step 1/5. Functionally, part of a heterotetrameric complex that catalyzes the two-step biosynthesis of anthranilate, an intermediate in the biosynthesis of L-tryptophan. In the first step, the glutamine-binding beta subunit of anthranilate synthase (AS) provides the glutamine amidotransferase activity which generates ammonia as a substrate that, along with chorismate, is used in the second step, catalyzed by the large alpha subunit of AS to produce anthranilate. The polypeptide is Anthranilate synthase beta subunit 1, chloroplastic (Oryza sativa subsp. japonica (Rice)).